Reading from the N-terminus, the 345-residue chain is uncharacterized protein (345 aa).

It localises to the cell membrane. Involved in potassium and divalent cation transport. Enhances the transport activity of the cation/potassium transporter CzcD. This is an uncharacterized protein from Bacillus velezensis (strain DSM 23117 / BGSC 10A6 / LMG 26770 / FZB42) (Bacillus amyloliquefaciens subsp. plantarum).